Consider the following 89-residue polypeptide: Cell division topological specificity factor (89 aa).

Belongs to the MinE family.

Functionally, prevents the cell division inhibition by proteins MinC and MinD at internal division sites while permitting inhibition at polar sites. This ensures cell division at the proper site by restricting the formation of a division septum at the midpoint of the long axis of the cell. This is Cell division topological specificity factor from Serratia proteamaculans (strain 568).